Here is a 146-residue protein sequence, read N- to C-terminus: Hemoglobin subunit beta (146 aa).

Valine 1 carries the post-translational modification N-acetylvaline. Residues 2–146 (HLTAEEKSAV…VANALAHKYH (145 aa)) enclose the Globin domain. Serine 44 is subject to Phosphoserine. At lysine 59 the chain carries N6-acetyllysine. Histidine 63 serves as a coordination point for heme b. N6-acetyllysine is present on lysine 82. Residue histidine 92 participates in heme b binding. Cysteine 93 bears the S-nitrosocysteine mark. An N6-acetyllysine modification is found at lysine 144.

It belongs to the globin family. Heterotetramer of two alpha chains and two beta chains. As to expression, red blood cells.

Involved in oxygen transport from the lung to the various peripheral tissues. The polypeptide is Hemoglobin subunit beta (Tamias merriami (Merriam's chipmunk)).